The following is a 500-amino-acid chain: Probable cytosol aminopeptidase (500 aa).

Mn(2+) is bound by residues lysine 265 and aspartate 270. Residue lysine 277 is part of the active site. 3 residues coordinate Mn(2+): aspartate 288, aspartate 347, and glutamate 349. The active site involves arginine 351.

Belongs to the peptidase M17 family. Mn(2+) is required as a cofactor.

Its subcellular location is the cytoplasm. The enzyme catalyses Release of an N-terminal amino acid, Xaa-|-Yaa-, in which Xaa is preferably Leu, but may be other amino acids including Pro although not Arg or Lys, and Yaa may be Pro. Amino acid amides and methyl esters are also readily hydrolyzed, but rates on arylamides are exceedingly low.. It catalyses the reaction Release of an N-terminal amino acid, preferentially leucine, but not glutamic or aspartic acids.. In terms of biological role, presumably involved in the processing and regular turnover of intracellular proteins. Catalyzes the removal of unsubstituted N-terminal amino acids from various peptides. The chain is Probable cytosol aminopeptidase from Rickettsia rickettsii (strain Iowa).